The chain runs to 2523 residues: Non-reducing polyketide synthase Preu3 (2523 aa).

The N-terminal acylcarrier protein transacylase domain (SAT) stretch occupies residues 58–247; sequence LQSLASERRA…KILAMTGSFH (190 aa). Residues 373–792 form the Ketosynthase family 3 (KS3) domain; that stretch reads DNAVAVVGMA…GSNGAMIVCQ (420 aa). Active-site for beta-ketoacyl synthase activity residues include Cys539, His674, and His715. The malonyl-CoA:ACP transacylase (MAT) domain stretch occupies residues 900 to 1207; that stretch reads CFGGQVKAFV…KAFGSLADAT (308 aa). Ser986 serves as the catalytic For acyl/malonyl transferase activity. The N-terminal hotdog fold stretch occupies residues 1271 to 1398; it reads HELLTFSSFE…GLVAFGGTVE (128 aa). The PKS/mFAS DH domain occupies 1271-1573; the sequence is HELLTFSSFE…FTRVTVPGLR (303 aa). The product template (PT) domain stretch occupies residues 1301-1568; it reads LVKGHAVVAQ…ALGCRFTRVT (268 aa). Catalysis depends on His1305, which acts as the Proton acceptor; for dehydratase activity. The C-terminal hotdog fold stretch occupies residues 1421–1573; the sequence is ECDALRGSAT…FTRVTVPGLR (153 aa). Asp1483 (proton donor; for dehydratase activity) is an active-site residue. Residues 1579–1601 form a disordered region; sequence ANGDARAQERPSGSRISPSPLAP. The Carrier domain maps to 1639–1713; that stretch reads VDYLAQVKAL…KLAEYLAKTL (75 aa). At Ser1673 the chain carries O-(pantetheine 4'-phosphoryl)serine. A disordered region spans residues 1735–1757; it reads DAEQSSDESPYDSTDDSASGYGD. The span at 1738–1749 shows a compositional bias: acidic residues; the sequence is QSSDESPYDSTD. The segment at 1986–2085 is methyltransferase (CMeT) domain; that stretch reads LEIGGGTGGT…MRQLLSSEGF (100 aa). Positions 2218-2520 are thioesterase (TE) domain; it reads LILHGGGHVL…RALEWLVEQC (303 aa).

Requires pantetheine 4'-phosphate as cofactor.

The catalysed reaction is 3 malonyl-CoA + acetyl-CoA + S-adenosyl-L-methionine + H(+) = 3-methylorsellinate + S-adenosyl-L-homocysteine + 3 CO2 + 4 CoA. Non-reducing polyketide synthase; part of a gene cluster that mediates the biosynthesis of a yet unidentified natural product. The first step in the pathway is performed by Preu3 that condenses one acetyl-CoA starter unit with 3 malonyl-CoA units. Preu3 also catalyzes one methylation step to produce 3-methylorsellinate, an intermediate that exhibits significant antibacterial activities against methicillin-resistant Staphylococcus aureus, multidrug-resistant Enterococcus faecalis, multidrug-resistant Enterococcus faecium, and multidrug-resistant Staphylococcus epidermidis. The polypeptide is Non-reducing polyketide synthase Preu3 (Preussia isomera (Coprophilous fungus)).